The primary structure comprises 284 residues: T-cell leukemia homeobox protein 2 (284 aa).

Disordered stretches follow at residues 1–50 (MEPG…NGAF), 78–106 (GGVI…GPSG), and 139–166 (FSGT…SFSR). The segment covering 30–50 (TPGGGLGLGRGGQGHGENGAF) has biased composition (gly residues). Positions 87–96 (RPLPVPPPAG) are enriched in pro residues. A DNA-binding region (homeobox) is located at residues 157–216 (RKKPRTSFSRSQVLELERRFLRQKYLASAERAALAKALRMTDAQVKTWFQNRRTKWRRQT).

It is found in the nucleus. Transcription activator that binds DNA elements with the consensus sequence 5'-CGGTAATTGG-3'. Binds DNA via its homeobox. Required for normal cell death of enteric neurons in the gastrointestinal tract. Required for normal development of the enteric nervous system, and for proper development of normal motility of the gastrointestinal tract. The chain is T-cell leukemia homeobox protein 2 (TLX2) from Homo sapiens (Human).